The following is a 201-amino-acid chain: Peptidyl-tRNA hydrolase (201 aa).

Tyrosine 15 is a tRNA binding site. The active-site Proton acceptor is the histidine 20. Residues tyrosine 66, asparagine 68, and asparagine 114 each contribute to the tRNA site.

This sequence belongs to the PTH family. As to quaternary structure, monomer.

Its subcellular location is the cytoplasm. It carries out the reaction an N-acyl-L-alpha-aminoacyl-tRNA + H2O = an N-acyl-L-amino acid + a tRNA + H(+). Its function is as follows. Hydrolyzes ribosome-free peptidyl-tRNAs (with 1 or more amino acids incorporated), which drop off the ribosome during protein synthesis, or as a result of ribosome stalling. Catalyzes the release of premature peptidyl moieties from peptidyl-tRNA molecules trapped in stalled 50S ribosomal subunits, and thus maintains levels of free tRNAs and 50S ribosomes. The protein is Peptidyl-tRNA hydrolase of Burkholderia mallei (strain NCTC 10247).